The sequence spans 311 residues: Ribosomal RNA small subunit methyltransferase H (311 aa).

S-adenosyl-L-methionine is bound by residues 32-34 (AGH), D52, F79, D100, and Q107.

Belongs to the methyltransferase superfamily. RsmH family.

Its subcellular location is the cytoplasm. The enzyme catalyses cytidine(1402) in 16S rRNA + S-adenosyl-L-methionine = N(4)-methylcytidine(1402) in 16S rRNA + S-adenosyl-L-homocysteine + H(+). Its function is as follows. Specifically methylates the N4 position of cytidine in position 1402 (C1402) of 16S rRNA. The polypeptide is Ribosomal RNA small subunit methyltransferase H (Staphylococcus aureus (strain COL)).